The following is a 168-amino-acid chain: Replicase polyprotein 1ab (168 aa).

The 165-residue stretch at 1-165 (PNTKSIDGEN…KLLNFGNHLV (165 aa)) folds into the Nidovirus-type SAM-dependent 2'-O-MTase domain.

The replicase polyprotein of coronaviruses is a multifunctional protein: it contains the activities necessary for the transcription of negative stranded RNA, leader RNA, subgenomic mRNAs and progeny virion RNA as well as proteinases responsible for the cleavage of the polyprotein into functional products. This chain is Replicase polyprotein 1ab (rep), found in Canine coronavirus (strain Insavc-1) (CCoV).